The primary structure comprises 710 residues: Protein-glutamine gamma-glutamyltransferase Z (710 aa).

Active-site residues include Cys-279, His-338, and Asp-361. Ca(2+) contacts are provided by Asn-401, Asp-403, Glu-450, and Glu-455.

Belongs to the transglutaminase superfamily. Transglutaminase family. Ca(2+) serves as cofactor. As to expression, widely expressed.

It carries out the reaction L-glutaminyl-[protein] + L-lysyl-[protein] = [protein]-L-lysyl-N(6)-5-L-glutamyl-[protein] + NH4(+). Its function is as follows. Catalyzes the cross-linking of proteins and the conjugation of polyamines to proteins. This is Protein-glutamine gamma-glutamyltransferase Z (TGM7) from Homo sapiens (Human).